The chain runs to 355 residues: Holliday junction branch migration complex subunit RuvB (355 aa).

The tract at residues 1–43 is disordered; it reads MEEMDDFTVRRGEREDITGAAGPPEERPLDPAAFEEDDEPTLR. The segment at 4–203 is large ATPase domain (RuvB-L); sequence MDDFTVRRGE…FGFSARLDYY (200 aa). Residues 7–17 are compositionally biased toward basic and acidic residues; sequence FTVRRGEREDI. Residues Leu-42, Arg-43, Gly-84, Lys-87, Thr-88, Ser-89, 150-152, Arg-193, Tyr-203, and Arg-240 contribute to the ATP site; that span reads EDF. Thr-88 serves as a coordination point for Mg(2+). A small ATPAse domain (RuvB-S) region spans residues 204–274; it reads EPHELEKIVV…TANAALEMQG (71 aa). Residues 277–355 are head domain (RuvB-H); that stretch reads HLGLDRTDRE…HLGFPVRDGG (79 aa). DNA is bound by residues Arg-313, Arg-332, and Arg-337.

Belongs to the RuvB family. Homohexamer. Forms an RuvA(8)-RuvB(12)-Holliday junction (HJ) complex. HJ DNA is sandwiched between 2 RuvA tetramers; dsDNA enters through RuvA and exits via RuvB. An RuvB hexamer assembles on each DNA strand where it exits the tetramer. Each RuvB hexamer is contacted by two RuvA subunits (via domain III) on 2 adjacent RuvB subunits; this complex drives branch migration. In the full resolvosome a probable DNA-RuvA(4)-RuvB(12)-RuvC(2) complex forms which resolves the HJ.

Its subcellular location is the cytoplasm. The enzyme catalyses ATP + H2O = ADP + phosphate + H(+). Its function is as follows. The RuvA-RuvB-RuvC complex processes Holliday junction (HJ) DNA during genetic recombination and DNA repair, while the RuvA-RuvB complex plays an important role in the rescue of blocked DNA replication forks via replication fork reversal (RFR). RuvA specifically binds to HJ cruciform DNA, conferring on it an open structure. The RuvB hexamer acts as an ATP-dependent pump, pulling dsDNA into and through the RuvAB complex. RuvB forms 2 homohexamers on either side of HJ DNA bound by 1 or 2 RuvA tetramers; 4 subunits per hexamer contact DNA at a time. Coordinated motions by a converter formed by DNA-disengaged RuvB subunits stimulates ATP hydrolysis and nucleotide exchange. Immobilization of the converter enables RuvB to convert the ATP-contained energy into a lever motion, pulling 2 nucleotides of DNA out of the RuvA tetramer per ATP hydrolyzed, thus driving DNA branch migration. The RuvB motors rotate together with the DNA substrate, which together with the progressing nucleotide cycle form the mechanistic basis for DNA recombination by continuous HJ branch migration. Branch migration allows RuvC to scan DNA until it finds its consensus sequence, where it cleaves and resolves cruciform DNA. The sequence is that of Holliday junction branch migration complex subunit RuvB from Rubrobacter xylanophilus (strain DSM 9941 / JCM 11954 / NBRC 16129 / PRD-1).